We begin with the raw amino-acid sequence, 957 residues long: Glycine dehydrogenase (decarboxylating) (957 aa).

The residue at position 708 (Lys-708) is an N6-(pyridoxal phosphate)lysine.

It belongs to the GcvP family. The glycine cleavage system is composed of four proteins: P, T, L and H. It depends on pyridoxal 5'-phosphate as a cofactor.

It carries out the reaction N(6)-[(R)-lipoyl]-L-lysyl-[glycine-cleavage complex H protein] + glycine + H(+) = N(6)-[(R)-S(8)-aminomethyldihydrolipoyl]-L-lysyl-[glycine-cleavage complex H protein] + CO2. Its function is as follows. The glycine cleavage system catalyzes the degradation of glycine. The P protein binds the alpha-amino group of glycine through its pyridoxal phosphate cofactor; CO(2) is released and the remaining methylamine moiety is then transferred to the lipoamide cofactor of the H protein. The protein is Glycine dehydrogenase (decarboxylating) of Escherichia coli O1:K1 / APEC.